Reading from the N-terminus, the 474-residue chain is Synaptotagmin-15B (474 aa).

Disordered stretches follow at residues 1–62 and 75–128; these read MGVV…AASG and PRAA…PPAV. Low complexity predominate over residues 75–88; that stretch reads PRAAAGHQQHHGPP. 2 C2 domains span residues 200-317 and 331-452; these read CLGR…RRVI and EFGD…EHWD.

The protein belongs to the synaptotagmin family.

In Homo sapiens (Human), this protein is Synaptotagmin-15B.